The sequence spans 66 residues: Conotoxin PnMLCL-01 (66 aa).

Positions 1–19 (MLCLPVFIILLLLASPAAS) are cleaved as a signal peptide. A propeptide spanning residues 20 to 45 (NPLEKRIQSDLIRAALEDADTKNDPR) is cleaved from the precursor. Cys63 carries the post-translational modification Cysteine amide.

It belongs to the conotoxin T superfamily. Post-translationally, contains 2 disulfide bonds that can be either 'C1-C3, C2-C4' or 'C1-C4, C2-C3', since these disulfide connectivities have been observed for conotoxins with cysteine framework V (for examples, see AC P0DQQ7 and AC P81755). Expressed by the venom duct.

Its subcellular location is the secreted. The chain is Conotoxin PnMLCL-01 from Conus pennaceus (Feathered cone).